We begin with the raw amino-acid sequence, 72 residues long: Protein SlyX homolog (72 aa).

A disordered region spans residues 53 to 72 (KDISPSNIRREEEETPPPHY).

Belongs to the SlyX family.

The sequence is that of Protein SlyX homolog from Marinobacter nauticus (strain ATCC 700491 / DSM 11845 / VT8) (Marinobacter aquaeolei).